A 332-amino-acid chain; its full sequence is 5-dehydro-2-deoxygluconokinase (332 aa).

The protein belongs to the carbohydrate kinase PfkB family.

The catalysed reaction is 5-dehydro-2-deoxy-D-gluconate + ATP = 6-phospho-5-dehydro-2-deoxy-D-gluconate + ADP + H(+). Its pathway is polyol metabolism; myo-inositol degradation into acetyl-CoA; acetyl-CoA from myo-inositol: step 5/7. Catalyzes the phosphorylation of 5-dehydro-2-deoxy-D-gluconate (2-deoxy-5-keto-D-gluconate or DKG) to 6-phospho-5-dehydro-2-deoxy-D-gluconate (DKGP). The chain is 5-dehydro-2-deoxygluconokinase from Bacillus thuringiensis (strain Al Hakam).